Here is a 267-residue protein sequence, read N- to C-terminus: Small ribosomal subunit protein uS2 (267 aa).

The disordered stretch occupies residues 247–267 (LEDDILEDVEDEEEGDPEQGE).

The protein belongs to the universal ribosomal protein uS2 family.

The protein is Small ribosomal subunit protein uS2 of Synechococcus sp. (strain JA-3-3Ab) (Cyanobacteria bacterium Yellowstone A-Prime).